Consider the following 346-residue polypeptide: Zinc finger CCCH domain-containing protein 28 (346 aa).

The segment at 1–99 is disordered; it reads MASAETPNPD…SPRYPDGKRR (99 aa). The span at 17-41 shows a compositional bias: low complexity; that stretch reads DAAAAADPAAAAPAAAATDPAAAGS. Basic residues predominate over residues 62–86; it reads RSSRSRSRSPRRGRSRSRSRSRSRG. 6 C3H1-type zinc fingers span residues 103-131, 138-165, 181-209, 211-237, 282-308, and 314-340; these read DLNV…HPHP, DSKV…HPPP, KVKM…HHSP, EDCA…HVMA, NYGV…HPDL, and NTQV…HPPA.

The protein is Zinc finger CCCH domain-containing protein 28 of Oryza sativa subsp. japonica (Rice).